Here is a 109-residue protein sequence, read N- to C-terminus: uncharacterized protein (109 aa).

This is an uncharacterized protein from Mycoplasma pneumoniae (strain ATCC 29342 / M129 / Subtype 1) (Mycoplasmoides pneumoniae).